A 381-amino-acid polypeptide reads, in one-letter code: Homoserine O-succinyltransferase (381 aa).

Residues 45–360 enclose the AB hydrolase-1 domain; sequence NAVLVCHALN…PHGHDAFLLD (316 aa). The active-site Nucleophile is Ser151. A substrate-binding site is contributed by Arg221. Residues Asp321 and His354 contribute to the active site. Asp355 provides a ligand contact to substrate.

This sequence belongs to the AB hydrolase superfamily. MetX family. As to quaternary structure, homodimer.

It is found in the cytoplasm. The enzyme catalyses L-homoserine + succinyl-CoA = O-succinyl-L-homoserine + CoA. It participates in amino-acid biosynthesis; L-methionine biosynthesis via de novo pathway; O-succinyl-L-homoserine from L-homoserine: step 1/1. Transfers a succinyl group from succinyl-CoA to L-homoserine, forming succinyl-L-homoserine. The chain is Homoserine O-succinyltransferase from Burkholderia thailandensis (strain ATCC 700388 / DSM 13276 / CCUG 48851 / CIP 106301 / E264).